Here is an 873-residue protein sequence, read N- to C-terminus: Alanine--tRNA ligase (873 aa).

Zn(2+)-binding residues include histidine 562, histidine 566, cysteine 663, and histidine 667.

The protein belongs to the class-II aminoacyl-tRNA synthetase family. Zn(2+) serves as cofactor.

Its subcellular location is the cytoplasm. The enzyme catalyses tRNA(Ala) + L-alanine + ATP = L-alanyl-tRNA(Ala) + AMP + diphosphate. Catalyzes the attachment of alanine to tRNA(Ala) in a two-step reaction: alanine is first activated by ATP to form Ala-AMP and then transferred to the acceptor end of tRNA(Ala). Also edits incorrectly charged Ser-tRNA(Ala) and Gly-tRNA(Ala) via its editing domain. The polypeptide is Alanine--tRNA ligase (Bordetella petrii (strain ATCC BAA-461 / DSM 12804 / CCUG 43448)).